Reading from the N-terminus, the 217-residue chain is Small ribosomal subunit protein uS3 (217 aa).

One can recognise a KH type-2 domain in the interval 38–106 (VRKYIETALK…RVHINIIEIK (69 aa)).

The protein belongs to the universal ribosomal protein uS3 family. As to quaternary structure, part of the 30S ribosomal subunit. Forms a tight complex with proteins S10 and S14.

Its function is as follows. Binds the lower part of the 30S subunit head. Binds mRNA in the 70S ribosome, positioning it for translation. The protein is Small ribosomal subunit protein uS3 of Lysinibacillus sphaericus (strain C3-41).